The following is a 352-amino-acid chain: Holliday junction branch migration complex subunit RuvB (352 aa).

The interval proline 4 to tyrosine 185 is large ATPase domain (RuvB-L). ATP is bound by residues isoleucine 24, arginine 25, glycine 66, lysine 69, threonine 70, threonine 71, glutamate 132–phenylalanine 134, arginine 175, tyrosine 185, and arginine 222. Residue threonine 70 coordinates Mg(2+). Positions asparagine 186–aspartate 256 are small ATPAse domain (RuvB-S). The interval glutamate 259–asparagine 352 is head domain (RuvB-H). DNA-binding residues include arginine 295, arginine 314, and arginine 319.

The protein belongs to the RuvB family. In terms of assembly, homohexamer. Forms an RuvA(8)-RuvB(12)-Holliday junction (HJ) complex. HJ DNA is sandwiched between 2 RuvA tetramers; dsDNA enters through RuvA and exits via RuvB. An RuvB hexamer assembles on each DNA strand where it exits the tetramer. Each RuvB hexamer is contacted by two RuvA subunits (via domain III) on 2 adjacent RuvB subunits; this complex drives branch migration. In the full resolvosome a probable DNA-RuvA(4)-RuvB(12)-RuvC(2) complex forms which resolves the HJ.

The protein resides in the cytoplasm. The catalysed reaction is ATP + H2O = ADP + phosphate + H(+). The RuvA-RuvB-RuvC complex processes Holliday junction (HJ) DNA during genetic recombination and DNA repair, while the RuvA-RuvB complex plays an important role in the rescue of blocked DNA replication forks via replication fork reversal (RFR). RuvA specifically binds to HJ cruciform DNA, conferring on it an open structure. The RuvB hexamer acts as an ATP-dependent pump, pulling dsDNA into and through the RuvAB complex. RuvB forms 2 homohexamers on either side of HJ DNA bound by 1 or 2 RuvA tetramers; 4 subunits per hexamer contact DNA at a time. Coordinated motions by a converter formed by DNA-disengaged RuvB subunits stimulates ATP hydrolysis and nucleotide exchange. Immobilization of the converter enables RuvB to convert the ATP-contained energy into a lever motion, pulling 2 nucleotides of DNA out of the RuvA tetramer per ATP hydrolyzed, thus driving DNA branch migration. The RuvB motors rotate together with the DNA substrate, which together with the progressing nucleotide cycle form the mechanistic basis for DNA recombination by continuous HJ branch migration. Branch migration allows RuvC to scan DNA until it finds its consensus sequence, where it cleaves and resolves cruciform DNA. This chain is Holliday junction branch migration complex subunit RuvB, found in Pseudomonas aeruginosa (strain LESB58).